Consider the following 1082-residue polypeptide: Importin-4 (1082 aa).

Residue methionine 1 is modified to N-acetylmethionine. Residues 24–90 (ATEQLQTILR…KSLVLTALQK (67 aa)) enclose the Importin N-terminal domain. HEAT repeat units lie at residues 348 to 385 (KLCP…GAGD), 390 to 427 (RLLY…NLQP), 431 to 471 (SYSE…NLGP), 475 to 513 (PYLP…AAQD), 896 to 933 (QFVS…HGGC), and 937 to 975 (DHFP…ASPV).

Belongs to the importin beta family. Found in a cytosolic complex with ASF1 (ASF1A or ASF1B) and histones H3 and H4.

The protein resides in the cytoplasm. The protein localises to the nucleus. Functionally, nuclear transport receptor that mediates nuclear import of proteins, such as histones, RPS3A, TNP2 and VDR. Serves as receptor for nuclear localization signals (NLS) in cargo substrates. Is thought to mediate docking of the importin/substrate complex to the nuclear pore complex (NPC) through binding to nucleoporin and the complex is subsequently translocated through the pore by an energy requiring, Ran-dependent mechanism. At the nucleoplasmic side of the NPC, Ran binds to the importin, the importin/substrate complex dissociates and importin is re-exported from the nucleus to the cytoplasm where GTP hydrolysis releases Ran. The directionality of nuclear import is thought to be conferred by an asymmetric distribution of the GTP- and GDP-bound forms of Ran between the cytoplasm and nucleus. Mediates the nuclear import of the histone H3-H4 dimer when in complex with ASF1 (ASF1A or ASF1B). Mediates the ligand-independent nuclear import of vitamin D receptor (VDR). In Mus musculus (Mouse), this protein is Importin-4 (Ipo4).